Reading from the N-terminus, the 506-residue chain is ATP synthase subunit alpha (506 aa).

169-176 (GDRGTGKT) contributes to the ATP binding site.

It belongs to the ATPase alpha/beta chains family. In terms of assembly, F-type ATPases have 2 components, CF(1) - the catalytic core - and CF(0) - the membrane proton channel. CF(1) has five subunits: alpha(3), beta(3), gamma(1), delta(1), epsilon(1). CF(0) has three main subunits: a(1), b(2) and c(9-12). The alpha and beta chains form an alternating ring which encloses part of the gamma chain. CF(1) is attached to CF(0) by a central stalk formed by the gamma and epsilon chains, while a peripheral stalk is formed by the delta and b chains.

The protein localises to the cell membrane. The enzyme catalyses ATP + H2O + 4 H(+)(in) = ADP + phosphate + 5 H(+)(out). Its function is as follows. Produces ATP from ADP in the presence of a proton gradient across the membrane. The alpha chain is a regulatory subunit. This Symbiobacterium thermophilum (strain DSM 24528 / JCM 14929 / IAM 14863 / T) protein is ATP synthase subunit alpha.